Consider the following 88-residue polypeptide: Large ribosomal subunit protein bL27 (88 aa).

Residues 1 to 13 (MATKKSGGSSSNG) are compositionally biased toward low complexity. The interval 1-24 (MATKKSGGSSSNGRDSRGRRLGVK) is disordered.

The protein belongs to the bacterial ribosomal protein bL27 family.

This Ehrlichia ruminantium (strain Gardel) protein is Large ribosomal subunit protein bL27.